A 150-amino-acid polypeptide reads, in one-letter code: Large-conductance mechanosensitive channel (150 aa).

A run of 2 helical transmembrane segments spans residues Val-14–Leu-34 and Gly-81–Ile-101.

The protein belongs to the MscL family. As to quaternary structure, homopentamer.

The protein localises to the cell membrane. Channel that opens in response to stretch forces in the membrane lipid bilayer. May participate in the regulation of osmotic pressure changes within the cell. In Desulfitobacterium hafniense (strain DSM 10664 / DCB-2), this protein is Large-conductance mechanosensitive channel.